The primary structure comprises 197 residues: dITP/XTP pyrophosphatase (197 aa).

Residue 10–15 (SHNGGK) participates in substrate binding. Glu41 and Asp70 together coordinate Mg(2+). The active-site Proton acceptor is the Asp70. Residues Ser71, 154–157 (FGYD), Lys177, and 182–183 (HR) contribute to the substrate site.

This sequence belongs to the HAM1 NTPase family. Homodimer. Mg(2+) serves as cofactor.

It carries out the reaction XTP + H2O = XMP + diphosphate + H(+). The catalysed reaction is dITP + H2O = dIMP + diphosphate + H(+). The enzyme catalyses ITP + H2O = IMP + diphosphate + H(+). In terms of biological role, pyrophosphatase that catalyzes the hydrolysis of nucleoside triphosphates to their monophosphate derivatives, with a high preference for the non-canonical purine nucleotides XTP (xanthosine triphosphate), dITP (deoxyinosine triphosphate) and ITP. Seems to function as a house-cleaning enzyme that removes non-canonical purine nucleotides from the nucleotide pool, thus preventing their incorporation into DNA/RNA and avoiding chromosomal lesions. The chain is dITP/XTP pyrophosphatase from Pseudomonas syringae pv. tomato (strain ATCC BAA-871 / DC3000).